The chain runs to 375 residues: CCN family member 1 (375 aa).

The N-terminal stretch at 1–22 (MGSAGARPALAAALLCLARLAL) is a signal peptide. Residues 23–94 (GSPCPAVCQC…AATNGICRAQ (72 aa)) form the IGFBP N-terminal domain. Intrachain disulfides connect Cys-26/Cys-50, Cys-30/Cys-52, Cys-32/Cys-53, Cys-39/Cys-56, Cys-64/Cys-78, and Cys-70/Cys-91. The region spanning 98–164 (RPCEYNSKIY…GQCCEEWVCD (67 aa)) is the VWFC domain. Residues 223 to 268 (KCIVQTTSWSQCSKTCGTGISTRVTNDNPDCKLIKETRICEVRPCG) enclose the TSP type-1 domain. Residues 274–310 (SLKKGKKCTKTKKSPSPVRFTYAGCSSVKKYRPKYCG) form a heparin-binding region. 5 disulfides stabilise this stretch: Cys-281-Cys-318, Cys-298-Cys-332, Cys-309-Cys-348, Cys-312-Cys-350, and Cys-317-Cys-354. Residues 281-355 (CTKTKKSPSP…QSCRCNYNCP (75 aa)) enclose the CTCK domain.

This sequence belongs to the CCN family.

The protein localises to the secreted. Probable secreted regulatory protein. This chain is CCN family member 1 (CCN1), found in Gallus gallus (Chicken).